Here is a 186-residue protein sequence, read N- to C-terminus: ATP synthase subunit delta (186 aa).

Belongs to the ATPase delta chain family. F-type ATPases have 2 components, F(1) - the catalytic core - and F(0) - the membrane proton channel. F(1) has five subunits: alpha(3), beta(3), gamma(1), delta(1), epsilon(1). F(0) has three main subunits: a(1), b(2) and c(10-14). The alpha and beta chains form an alternating ring which encloses part of the gamma chain. F(1) is attached to F(0) by a central stalk formed by the gamma and epsilon chains, while a peripheral stalk is formed by the delta and b chains.

It localises to the cell inner membrane. Its function is as follows. F(1)F(0) ATP synthase produces ATP from ADP in the presence of a proton or sodium gradient. F-type ATPases consist of two structural domains, F(1) containing the extramembraneous catalytic core and F(0) containing the membrane proton channel, linked together by a central stalk and a peripheral stalk. During catalysis, ATP synthesis in the catalytic domain of F(1) is coupled via a rotary mechanism of the central stalk subunits to proton translocation. In terms of biological role, this protein is part of the stalk that links CF(0) to CF(1). It either transmits conformational changes from CF(0) to CF(1) or is implicated in proton conduction. This Brucella canis (strain ATCC 23365 / NCTC 10854 / RM-666) protein is ATP synthase subunit delta.